A 437-amino-acid polypeptide reads, in one-letter code: Interactor protein for cytohesin exchange factors 1 (437 aa).

Residues 41–140 (HADCQGWLYK…WLNKLGSAVI (100 aa)) enclose the PH domain. Disordered stretches follow at residues 143–225 (ESTT…PDTV) and 273–307 (LSSD…ETKV). Over residues 151–162 (CYSESEQEDPEI) the composition is skewed to acidic residues. Residues 172-200 (ASQTQSLTAQQASSSSPSLSGTSYSFSSL) show a composition bias toward low complexity. The segment covering 201-214 (ENTVKTPSSFPSSL) has biased composition (polar residues). A compositionally biased stretch (low complexity) spans 273–283 (LSSDDTSSLSS). 2 CRAC domain regions span residues 315–320 (KLYKSL) and 339–348 (LRKSFVKRCK). Residues 389–437 (KYREWKVMNTLLIQDIYQQQRASPAPDDTDDTPQELKKSPSSPSVENSI) are required for interaction with CYTH2. The tract at residues 406 to 437 (QQQRASPAPDDTDDTPQELKKSPSSPSVENSI) is disordered. Residue S411 is modified to Phosphoserine. Over residues 427–437 (SPSSPSVENSI) the composition is skewed to polar residues.

In terms of assembly, interacts with guanine-nucleotide exchange factors PSCD1, PSCD2, PSCD3 and PSCD4. Interacts (via C-terminus) with cytohesin-2 CYTH2.

The protein localises to the cytoplasm. It localises to the cell membrane. Its function is as follows. Enhances the promotion of guanine-nucleotide exchange by PSCD2 on ARF6 in a concentration-dependent manner. This is Interactor protein for cytohesin exchange factors 1 (IPCEF1) from Homo sapiens (Human).